Reading from the N-terminus, the 664-residue chain is Intraflagellar transport protein 70B (664 aa).

TPR repeat units follow at residues 11–44, 45–78, 153–186, 188–220, 385–418, 423–456, and 458–491; these read DGEF…SPRS, RAGL…HPEL, LDGQ…SGYR, DLSY…GIRQ, LTEQ…YEDT, IPVL…CNDH, and VWKL…HYDN. Residues 509-532 are a coiled coil; sequence MISQNEEAEELMRKIGKEEEQLSY. One copy of the TPR 8 repeat lies at 543-576; it reads CIVNLVIGTLYCAKGNYDFGISRVIKSLEPCNKK.

The protein belongs to the TTC30/dfy-1/fleer family. Interacts with the IFT B complex components IFT27, IFT46, IFT74, IFT52, IFT57, IFT80, IFT81 and IFT88. Interacts with KIF17.

It localises to the cell projection. It is found in the cilium. Required for polyglutamylation of axonemal tubulin. Plays a role in anterograde intraflagellar transport (IFT), the process by which cilia precursors are transported from the base of the cilium to the site of their incorporation at the tip. The polypeptide is Intraflagellar transport protein 70B (IFT70B) (Bos taurus (Bovine)).